Here is a 168-residue protein sequence, read N- to C-terminus: Cyclic pyranopterin monophosphate synthase (168 aa).

Residues 81-83 (LCH) and 117-118 (ME) each bind substrate. The active site involves aspartate 132.

The protein belongs to the MoaC family. Homohexamer; trimer of dimers.

It carries out the reaction (8S)-3',8-cyclo-7,8-dihydroguanosine 5'-triphosphate = cyclic pyranopterin phosphate + diphosphate. It participates in cofactor biosynthesis; molybdopterin biosynthesis. Catalyzes the conversion of (8S)-3',8-cyclo-7,8-dihydroguanosine 5'-triphosphate to cyclic pyranopterin monophosphate (cPMP). The chain is Cyclic pyranopterin monophosphate synthase from Deinococcus radiodurans (strain ATCC 13939 / DSM 20539 / JCM 16871 / CCUG 27074 / LMG 4051 / NBRC 15346 / NCIMB 9279 / VKM B-1422 / R1).